An 886-amino-acid chain; its full sequence is MHDAFEPVPILEKLPLQIDCLAAWEEWLLVGTKQGHLLLYRIRKDVVPADVASPESGSCNRFEVTLEKSNKNFSKKIQQIHVVSQFKILVSLLENNIYVHDLLTFQQITTVSKAKGASLFTCDLQHTETGEEVLRMCVAVKKKLQLYFWKDREFHELQGDFSVPDVPKSMAWCENSICVGFKRDYYLIRVDGKGSIKELFPTGKQLEPLVAPLADGKVAVGQDDLTVVLNEEGICTQKCALNWTDIPVAMEHQPPYIIAVLPRYVEIRTFEPRLLVQSIELQRPRFITSGGSNIIYVASNHFVWRLIPVPMATQIQQLLQDKQFELALQLAEMKDDSDSEKQQQIHHIKNLYAFNLFCQKRFDESMQVFAKLGTDPTHVMGLYPDLLPTDYRKQLQYPNPLPVLSGAELEKAHLALIDYLTQKRSQLVKKLNDSDHQSSTSPLMEGTPTIKSKKKLLQIIDTTLLKCYLHTNVALVAPLLRLENNHCHIEESEHVLKKAHKYSELIILYEKKGLHEKALQVLVDQSKKANSPLKGHERTVQYLQHLGTENLHLIFSYSVWVLRDFPEDGLKIFTEDLPEVESLPRDRVLGFLIENFKGLAIPYLEHIIHVWEETGSRFHNCLIQLYCEKVQGLMKEYLLSFPAGKTPVPAGEEEGELGEYRQKLLMFLEISSYYDPGRLICDFPFDGLLEERALLLGRMGKHEQALFIYVHILKDTRMAEEYCHKHYDRNKDGNKDVYLSLLRMYLSPPSIHCLGPIKLELLEPKANLQAALQVLELHHSKLDTTKALNLLPANTQINDIRIFLEKVLEENAQKKRFNQVLKNLLHAEFLRVQEERILHQQVKCIITEEKVCMVCKKKIGNSAFARYPNGVVVHYFCSKEVNPADT.

The 280-residue stretch at P15–I294 folds into the CNH domain. Residues F573–S750 form a CHCR repeat.

Belongs to the VAM6/VPS39 family. Homooligomer. Interacts with TGFBR2 and, less efficiently, with TGFBR1; interaction with TGFBR2 is independent of the receptor kinase activity and of the presence of TGF-beta. Also interacts with ACVR2B, but not with BMPR2. Interacts with SMAD4, preferentially following TGF-beta treatment. Does not interact with SAMD2 or SMAD3. Component of the homotypic fusion and vacuole protein sorting (HOPS) complex; the core of which composed of the class C Vps proteins VPS11, VPS16, VPS18 and VPS33A, is associated with VPS39 and VPS41. Interacts with PLEKHM2; involved in VPS39 recruitment to ARL8B-containing lysosomes. Associates with adapter protein complex 3 (AP-3) and clathrin:AP-3 complexes. Interacts with STX17; this interaction is increased in the absence of TMEM39A. Interacts with RAB7, RAB2A and RAB2B. Interacts with RAB2A (GTP-bound); the interaction contributes to obtaining a functional HOPS complex that promotes autophagosome-lysosome membrane fusion driven by STX17-SNAP29-VAMP8. Interacts with RAB39A (GTP-bound) and RAB39B (GTP-bound); interaction with RAB39A contributes to obtaining a functional HOPS complex. As to quaternary structure, (Microbial infection) Interacts with SARS coronavirus-2/SARS-CoV-2 ORF3A protein; the interaction is direct and sequestrates VPS39, thereby preventing HOPS complex from interacting with the autophagosomal SNARE protein STX17. ORF3A enhances the interaction of VPS39 with VPS11 and VPS18, while its interaction with the VPS16:VPS33A module is attenuated. Widely expressed, with highest levels in heart, skeletal muscle, kidney, pancreas, brain, placenta and spleen.

The protein localises to the cytoplasm. It is found in the lysosome membrane. Its subcellular location is the late endosome membrane. Its function is as follows. Regulator of TGF-beta/activin signaling, inhibiting SMAD3- and activating SMAD2-dependent transcription. Acts by interfering with SMAD3/SMAD4 complex formation, this would lead to inhibition of SMAD3-dependent transcription and relieve SMAD3 inhibition of SMAD2-dependent promoters, thus increasing SMAD2-dependent transcription. Does not affect TGF-beta-induced SMAD2 or SMAD3 phosphorylation, nor SMAD2/SMAD4 complex formation. Plays a role in vesicle-mediated protein trafficking to lysosomal compartments including the endocytic membrane transport and autophagic pathways. Acts as a component of the HOPS endosomal tethering complex. This complex is proposed to be involved in the Rab5-to-Rab7 endosome conversion probably implicating MON1A/B, and via binding SNAREs and SNARE complexes to mediate tethering and docking events during SNARE-mediated membrane fusion. The HOPS complex is proposed to be recruited to Rab7 on the late endosomal membrane and to regulate late endocytic, phagocytic and autophagic traffic towards lysosomes. Involved in homotypic vesicle fusions between late endosomes and in heterotypic fusions between late endosomes and lysosomes. Required for fusion of endosomes and autophagosomes with lysosomes. The polypeptide is Vam6/Vps39-like protein (Homo sapiens (Human)).